The following is a 513-amino-acid chain: ATP synthase subunit alpha (513 aa).

169–176 (GDRQTGKT) is a binding site for ATP.

It belongs to the ATPase alpha/beta chains family. F-type ATPases have 2 components, CF(1) - the catalytic core - and CF(0) - the membrane proton channel. CF(1) has five subunits: alpha(3), beta(3), gamma(1), delta(1), epsilon(1). CF(0) has three main subunits: a(1), b(2) and c(9-12). The alpha and beta chains form an alternating ring which encloses part of the gamma chain. CF(1) is attached to CF(0) by a central stalk formed by the gamma and epsilon chains, while a peripheral stalk is formed by the delta and b chains.

It is found in the cell inner membrane. The catalysed reaction is ATP + H2O + 4 H(+)(in) = ADP + phosphate + 5 H(+)(out). Functionally, produces ATP from ADP in the presence of a proton gradient across the membrane. The alpha chain is a regulatory subunit. The protein is ATP synthase subunit alpha of Salmonella agona (strain SL483).